We begin with the raw amino-acid sequence, 275 residues long: Gibberellin-regulated protein 14 (275 aa).

The signal sequence occupies residues 1 to 21 (MALSLLSVFIFFHVFTNVVFA). A disordered region spans residues 34–207 (PTPTLPSPSP…TAPPVKPPTP (174 aa)). Positions 36 to 207 (PTLPSPSPAT…TAPPVKPPTP (172 aa)) are enriched in pro residues.

It belongs to the GASA family. In terms of processing, six disulfide bonds may be present. In terms of tissue distribution, expressed in flower abscission zone, style, stamen filaments and lateral roots.

Its subcellular location is the secreted. Gibberellin-regulated protein that may function in hormonal controlled steps of development such as seed germination, flowering and seed maturation. This Arabidopsis thaliana (Mouse-ear cress) protein is Gibberellin-regulated protein 14 (GASA14).